A 194-amino-acid polypeptide reads, in one-letter code: uncharacterized protein (194 aa).

This is an uncharacterized protein from Rickettsia prowazekii (strain Madrid E).